Reading from the N-terminus, the 807-residue chain is Probable dimethyl sulfoxide reductase chain YnfF (807 aa).

A signal peptide (tat-type signal) is located at residues 1–45; the sequence is MKIHTTEALMKAEISRRSLMKTSALGSLALASSAFTLPFSQMVRA. One can recognise a 4Fe-4S Mo/W bis-MGD-type domain in the interval 52-113; that stretch reads EKAVWSSCTV…SIRRRMNHPD (62 aa). [4Fe-4S] cluster is bound by residues Cys-59, Cys-63, Cys-67, and Cys-99. Residue Ser-195 participates in Mo-bis(molybdopterin guanine dinucleotide) binding.

This sequence belongs to the prokaryotic molybdopterin-containing oxidoreductase family. In terms of assembly, the complex consists of three subunits: YnfF, the reductase; YnfG, an electron transfer protein, and YnfH, a membrane anchor protein. [4Fe-4S] cluster serves as cofactor. Mo-bis(molybdopterin guanine dinucleotide) is required as a cofactor. Post-translationally, exported by the Tat system. The position of the signal peptide cleavage has not been experimentally proven. Can also be exported by the Sec system.

The protein resides in the cell membrane. Functionally, terminal reductase during anaerobic growth on various sulfoxide and N-oxide compounds. The polypeptide is Probable dimethyl sulfoxide reductase chain YnfF (ynfF) (Escherichia coli (strain K12)).